Consider the following 571-residue polypeptide: MAYEISRQQYGELYGPTTGDGIRLADTDLVLRIEKDLTAKGDEVGFGGGKVIREGMGMNARMTRDEGVVDTVITNAIIVDHTGIYKADIGIRDGLIEGIGRAGNPDVQDDIDIPVGVNTEAYAGEHTIVTAGAIDTHIHFISPDQFDTALSNGTTTFIGGGTGPADGTKATTITPGEWHIHRMIEATSDAPVNIGLLGKGHAAVPGPLKAQIRAGAIGLKIHEDWGATRSAIDTSLRVADELDVQIAIHTDTLNEYGYLEDTIKAIDHRTIHTFHTEGAGGGHAPDIIAIAGEKNVIPASTNPTLPFTKNTVDEHLDMLMVCHHLNKDIPEDVAFADSRIRGETIGVEDVLHDLGVFSITSSDSQAMGRVGEVVLRTWQVAHINKQQRGPLEGDSEGNDNNRIKRYVSKYTINPAIAHGISHLVGSVEVGKMADLVLWEPRFFGIKPKVVLKSGQAAYSEMGDSNGSIPTPQPVTYRRNWGATGAASETAAVTFVPSVALQSGVEDKLRGGRALLEARDMREITKKDLKHNAATPKIEVDPQTYQVRLDGELVEGSKPTETLPMGQKYFLF.

The Urease domain maps to 132–571 (GAIDTHIHFI…LPMGQKYFLF (440 aa)). The Ni(2+) site is built by His-137, His-139, and Lys-220. The residue at position 220 (Lys-220) is an N6-carboxylysine. His-222 provides a ligand contact to substrate. Ni(2+) contacts are provided by His-249 and His-275. His-323 functions as the Proton donor in the catalytic mechanism. Asp-363 contributes to the Ni(2+) binding site.

It belongs to the metallo-dependent hydrolases superfamily. Urease alpha subunit family. As to quaternary structure, heterotrimer of UreA (gamma), UreB (beta) and UreC (alpha) subunits. Three heterotrimers associate to form the active enzyme. Requires Ni cation as cofactor. Carboxylation allows a single lysine to coordinate two nickel ions.

It localises to the cytoplasm. The catalysed reaction is urea + 2 H2O + H(+) = hydrogencarbonate + 2 NH4(+). The protein operates within nitrogen metabolism; urea degradation; CO(2) and NH(3) from urea (urease route): step 1/1. This Corynebacterium urealyticum (strain ATCC 43042 / DSM 7109) protein is Urease subunit alpha.